A 279-amino-acid chain; its full sequence is Uroplakin-3b (279 aa).

A signal peptide spans 1–26 (MGLPSRQPRLWLLLLVVLGWPQPCLT). Residues 27–200 (LDLIPYTPRI…DTWPGRRSGD (174 aa)) are Lumenal-facing. A glycan (N-linked (GlcNAc...) asparagine) is linked at N77. The chain crosses the membrane as a helical span at residues 201 to 221 (MIIITSILSSLAGLLLLAFLA). The Cytoplasmic segment spans residues 222–279 (ASSVRFSSLWWPEEAPEQLRIGSFMGKRYMTHHIPPSEAATLPVGCEPGLERFPSLSP).

Belongs to the uroplakin-3 family. In terms of assembly, heterodimer with uroplakin-1B (UPK1B). As to expression, expression is urothelium-specific.

Its subcellular location is the cell membrane. Component of the asymmetric unit membrane (AUM); a highly specialized biomembrane elaborated by terminally differentiated urothelial cells. May play an important role in AUM-cytoskeleton interaction in terminally differentiated urothelial cells. It also contributes to the formation of urothelial glycocalyx which may play an important role in preventing bacterial adherence. This is Uroplakin-3b (UPK3B) from Bos taurus (Bovine).